The chain runs to 294 residues: tRNA dimethylallyltransferase (294 aa).

ATP is bound at residue 10–17 (GPTAVGKT). 12-17 (TAVGKT) provides a ligand contact to substrate. Residues 35–38 (DSQQ) are interaction with substrate tRNA.

The protein belongs to the IPP transferase family. In terms of assembly, monomer. Mg(2+) is required as a cofactor.

The enzyme catalyses adenosine(37) in tRNA + dimethylallyl diphosphate = N(6)-dimethylallyladenosine(37) in tRNA + diphosphate. Functionally, catalyzes the transfer of a dimethylallyl group onto the adenine at position 37 in tRNAs that read codons beginning with uridine, leading to the formation of N6-(dimethylallyl)adenosine (i(6)A). The protein is tRNA dimethylallyltransferase of Streptococcus pneumoniae serotype 19F (strain G54).